A 263-amino-acid chain; its full sequence is 3-deoxy-manno-octulosonate cytidylyltransferase (263 aa).

This sequence belongs to the KdsB family.

Its subcellular location is the cytoplasm. It carries out the reaction 3-deoxy-alpha-D-manno-oct-2-ulosonate + CTP = CMP-3-deoxy-beta-D-manno-octulosonate + diphosphate. The protein operates within nucleotide-sugar biosynthesis; CMP-3-deoxy-D-manno-octulosonate biosynthesis; CMP-3-deoxy-D-manno-octulosonate from 3-deoxy-D-manno-octulosonate and CTP: step 1/1. Its pathway is bacterial outer membrane biogenesis; lipopolysaccharide biosynthesis. Its function is as follows. Activates KDO (a required 8-carbon sugar) for incorporation into bacterial lipopolysaccharide in Gram-negative bacteria. The sequence is that of 3-deoxy-manno-octulosonate cytidylyltransferase from Burkholderia cenocepacia (strain ATCC BAA-245 / DSM 16553 / LMG 16656 / NCTC 13227 / J2315 / CF5610) (Burkholderia cepacia (strain J2315)).